The chain runs to 117 residues: 16 kDa protein (117 aa).

This Tobacco rattle virus (strain PLB) protein is 16 kDa protein.